We begin with the raw amino-acid sequence, 92 residues long: uncharacterized protein (92 aa).

This is an uncharacterized protein from Sulfolobus spindle-shape virus 1 (SSV1).